The primary structure comprises 330 residues: Ketol-acid reductoisomerase (NADP(+)) (330 aa).

The region spanning 1–181 is the KARI N-terminal Rossmann domain; the sequence is MKVFYDSDFK…GLSRAGVIQT (181 aa). Residues 24–27, arginine 47, serine 52, and 82–85 each bind NADP(+); these read YGSQ and DELQ. Histidine 107 is an active-site residue. Glycine 133 is an NADP(+) binding site. A KARI C-terminal knotted domain is found at 182-327; it reads TFKEETETDL…AKLRKMCGLE (146 aa). Mg(2+) contacts are provided by aspartate 190, glutamate 194, glutamate 226, and glutamate 230. Residue serine 251 coordinates substrate.

It belongs to the ketol-acid reductoisomerase family. The cofactor is Mg(2+).

The enzyme catalyses (2R)-2,3-dihydroxy-3-methylbutanoate + NADP(+) = (2S)-2-acetolactate + NADPH + H(+). It carries out the reaction (2R,3R)-2,3-dihydroxy-3-methylpentanoate + NADP(+) = (S)-2-ethyl-2-hydroxy-3-oxobutanoate + NADPH + H(+). Its pathway is amino-acid biosynthesis; L-isoleucine biosynthesis; L-isoleucine from 2-oxobutanoate: step 2/4. It participates in amino-acid biosynthesis; L-valine biosynthesis; L-valine from pyruvate: step 2/4. In terms of biological role, involved in the biosynthesis of branched-chain amino acids (BCAA). Catalyzes an alkyl-migration followed by a ketol-acid reduction of (S)-2-acetolactate (S2AL) to yield (R)-2,3-dihydroxy-isovalerate. In the isomerase reaction, S2AL is rearranged via a Mg-dependent methyl migration to produce 3-hydroxy-3-methyl-2-ketobutyrate (HMKB). In the reductase reaction, this 2-ketoacid undergoes a metal-dependent reduction by NADPH to yield (R)-2,3-dihydroxy-isovalerate. The chain is Ketol-acid reductoisomerase (NADP(+)) from Methanococcus maripaludis (strain C5 / ATCC BAA-1333).